Consider the following 1012-residue polypeptide: Ubiquitin-like modifier-activating enzyme 7 (1012 aa).

The stretch at 23 to 159 is one 1-1 repeat; that stretch reads GSPAMQRIQG…DTRGLVGQLF (137 aa). The tract at residues 23-575 is 2 approximate repeats; sequence GSPAMQRIQG…GTWGSATVFM (553 aa). Ser-266 carries the post-translational modification Phosphoserine. The stretch at 423–575 is one 1-2 repeat; it reads GAGFQEKLRR…GTWGSATVFM (153 aa). 442-471 contributes to the ATP binding site; that stretch reads AIGCELLKVFALVGLGAGNSGGLTVVDMDH. Catalysis depends on Cys-599, which acts as the Glycyl thioester intermediate.

It belongs to the ubiquitin-activating E1 family. (Microbial infection) Interacts with human cytomegalovirus proteins NEC2/UL50 and UL26; these interactions inhibit ISGylation and cause proteasomal degradation of UBA7. As to quaternary structure, (Microbial infection) Interacts with rotavirus non-structural protein 5 (NSP5); this interaction promotes UBA7 proteasomal degradation. In terms of assembly, monomer. Binds and is involved in the conjugation of G1P2/ISG15. ISGylated. In terms of processing, ubiquitinated by RNF170. In terms of tissue distribution, expressed in a variety of normal and tumor cell types, but is reduced in lung cancer cell lines.

It localises to the cytoplasm. It is found in the nucleus. It functions in the pathway protein modification; protein ubiquitination. Functionally, E1-activating enzyme that catalyzes the covalent conjugation of the ubiquitin-like protein product of ISG15 to additional interferon stimulated proteins (ISGs) as well as other cellular proteins such as P53 in a process termed protein ISGylation. Plays an essential role in antiviral immunity together with ISG15 by restricting the replication of many viruses including rabies virus, influenza virus, sindbis virus, rotavirus or human cytomegalovirus. For example, ISG15 modification of influenza A protein NS1 disrupts the association of the NS1 with importin-alpha leading to NS1 nuclear import inhibition. ISGylation of human cytomegalovirs protein UL26 regulates its stability and inhibits its activities to suppress NF-kappa-B signaling. In Homo sapiens (Human), this protein is Ubiquitin-like modifier-activating enzyme 7.